A 507-amino-acid chain; its full sequence is Histidine--tRNA ligase (507 aa).

The protein belongs to the class-II aminoacyl-tRNA synthetase family. As to quaternary structure, homodimer.

It localises to the cytoplasm. The enzyme catalyses tRNA(His) + L-histidine + ATP = L-histidyl-tRNA(His) + AMP + diphosphate + H(+). The polypeptide is Histidine--tRNA ligase (Rhizobium leguminosarum bv. trifolii (strain WSM2304)).